A 65-amino-acid polypeptide reads, in one-letter code: Sec-independent protein translocase protein TatA (65 aa).

A helical membrane pass occupies residues 9–29 (ILIIVLLVVVVFGVGKLPQVG). Positions 40–65 (RKASTGEDAKEEVETKEETKPAEKSE) are disordered. Basic and acidic residues predominate over residues 43-65 (STGEDAKEEVETKEETKPAEKSE).

Belongs to the TatA/E family. Forms a complex with TatC.

Its subcellular location is the cell membrane. Its function is as follows. Part of the twin-arginine translocation (Tat) system that transports large folded proteins containing a characteristic twin-arginine motif in their signal peptide across membranes. TatA could form the protein-conducting channel of the Tat system. The protein is Sec-independent protein translocase protein TatA of Dehalococcoides mccartyi (strain ATCC BAA-2100 / JCM 16839 / KCTC 5957 / BAV1).